We begin with the raw amino-acid sequence, 387 residues long: 1-deoxy-D-xylulose 5-phosphate reductoisomerase (387 aa).

8 residues coordinate NADPH: Thr-11, Gly-12, Ser-13, Ile-14, Gly-37, Arg-38, Gln-39, and Asn-127. Lys-128 provides a ligand contact to 1-deoxy-D-xylulose 5-phosphate. Residue Glu-129 participates in NADPH binding. Asp-153 serves as a coordination point for Mn(2+). Residues Ser-154, Glu-155, Ser-179, and His-200 each contribute to the 1-deoxy-D-xylulose 5-phosphate site. Glu-155 contacts Mn(2+). Residue Gly-206 coordinates NADPH. 1-deoxy-D-xylulose 5-phosphate-binding residues include Ser-213, Asn-218, Lys-219, and Glu-222. Glu-222 contributes to the Mn(2+) binding site.

The protein belongs to the DXR family. Mg(2+) serves as cofactor. It depends on Mn(2+) as a cofactor.

It catalyses the reaction 2-C-methyl-D-erythritol 4-phosphate + NADP(+) = 1-deoxy-D-xylulose 5-phosphate + NADPH + H(+). Its pathway is isoprenoid biosynthesis; isopentenyl diphosphate biosynthesis via DXP pathway; isopentenyl diphosphate from 1-deoxy-D-xylulose 5-phosphate: step 1/6. In terms of biological role, catalyzes the NADPH-dependent rearrangement and reduction of 1-deoxy-D-xylulose-5-phosphate (DXP) to 2-C-methyl-D-erythritol 4-phosphate (MEP). The protein is 1-deoxy-D-xylulose 5-phosphate reductoisomerase of Symbiobacterium thermophilum (strain DSM 24528 / JCM 14929 / IAM 14863 / T).